A 400-amino-acid chain; its full sequence is Subtilisin-like protease 7 (400 aa).

The signal sequence occupies residues 1 to 20; it reads MGFITKAIPLALAAMSVVNG. Positions 21–119 are excised as a propeptide; that stretch reads AEILETRAGV…IERDARVQIN (99 aa). Residues 36-118 enclose the Inhibitor I9 domain; that stretch reads KYIVIMNDGV…YIERDARVQI (83 aa). The 272-residue stretch at 129-400 folds into the Peptidase S8 domain; it reads SWGLARVGSR…GKLINNGSGK (272 aa). Residues Asp-161 and His-192 each act as charge relay system in the active site. Residues Asn-222 and Asn-252 are each glycosylated (N-linked (GlcNAc...) asparagine). The active-site Charge relay system is the Ser-346. Residue Asn-396 is glycosylated (N-linked (GlcNAc...) asparagine).

The protein belongs to the peptidase S8 family.

Its subcellular location is the secreted. Its function is as follows. Secreted subtilisin-like serine protease with keratinolytic activity that contributes to pathogenicity. The protein is Subtilisin-like protease 7 (SUB7) of Arthroderma otae (strain ATCC MYA-4605 / CBS 113480) (Microsporum canis).